Consider the following 543-residue polypeptide: CTP synthase (543 aa).

Residues methionine 1 to isoleucine 265 are amidoligase domain. Serine 13 is a binding site for CTP. Residue serine 13 participates in UTP binding. Serine 14–leucine 19 contacts ATP. Tyrosine 54 is an L-glutamine binding site. Aspartate 71 serves as a coordination point for ATP. Mg(2+)-binding residues include aspartate 71 and glutamate 139. CTP-binding positions include aspartate 146 to glutamate 148, lysine 186 to glutamine 191, and lysine 222. Residues lysine 186 to glutamine 191 and lysine 222 each bind UTP. Arginine 238–alanine 240 serves as a coordination point for ATP. Residues threonine 291 to leucine 542 form the Glutamine amidotransferase type-1 domain. Glycine 353 is a binding site for L-glutamine. Cysteine 380 acts as the Nucleophile; for glutamine hydrolysis in catalysis. L-glutamine-binding positions include phenylalanine 381–glutamine 384, glutamate 404, and arginine 470. Residues histidine 515 and glutamate 517 contribute to the active site.

It belongs to the CTP synthase family. As to quaternary structure, homotetramer.

It carries out the reaction UTP + L-glutamine + ATP + H2O = CTP + L-glutamate + ADP + phosphate + 2 H(+). It catalyses the reaction L-glutamine + H2O = L-glutamate + NH4(+). The catalysed reaction is UTP + NH4(+) + ATP = CTP + ADP + phosphate + 2 H(+). It participates in pyrimidine metabolism; CTP biosynthesis via de novo pathway; CTP from UDP: step 2/2. Its activity is regulated as follows. Allosterically activated by GTP, when glutamine is the substrate; GTP has no effect on the reaction when ammonia is the substrate. The allosteric effector GTP functions by stabilizing the protein conformation that binds the tetrahedral intermediate(s) formed during glutamine hydrolysis. Inhibited by the product CTP, via allosteric rather than competitive inhibition. Catalyzes the ATP-dependent amination of UTP to CTP with either L-glutamine or ammonia as the source of nitrogen. Regulates intracellular CTP levels through interactions with the four ribonucleotide triphosphates. The chain is CTP synthase from Rhodopseudomonas palustris (strain BisB5).